The following is a 512-amino-acid chain: Kelch repeat protein C2 (512 aa).

The region spanning 2–67 is the BTB domain; that stretch reads ESVIFSINGE…MRWKKINITI (66 aa). The BACK domain maps to 102-176; sequence CIRMFNFSKR…LLKWIHKNPN (75 aa). Kelch repeat units lie at residues 216–261, 262–307, 309–354, 356–403, 405–449, and 452–498; these read IKHN…LHNC, LYII…VNNG, LYVI…FVND, IYVM…EYDG, IYVI…SCGD, and LIIA…THKS.

The protein belongs to the poxviruses Kelch family.

In Rabbitpox virus (strain Utrecht) (RPV), this protein is Kelch repeat protein C2.